The following is a 210-amino-acid chain: 3-hexulose-6-phosphate synthase (210 aa).

Belongs to the HPS/KGPDC family. HPS subfamily.

The enzyme catalyses D-ribulose 5-phosphate + formaldehyde = D-arabino-hex-3-ulose 6-phosphate. Its pathway is one-carbon metabolism; formaldehyde assimilation via RuMP pathway; D-fructose 6-phosphate from D-ribulose 5-phosphate and formaldehyde: step 1/2. Functionally, catalyzes the condensation of ribulose 5-phosphate with formaldehyde to form 3-hexulose 6-phosphate. The chain is 3-hexulose-6-phosphate synthase from Staphylococcus aureus (strain USA300).